A 156-amino-acid polypeptide reads, in one-letter code: Putative increased recombination centers protein 11 (156 aa).

Residues 20–42 (AALGATCLLHYLTTSLSIRFFFH) traverse the membrane as a helical segment.

It localises to the membrane. In Saccharomyces cerevisiae (strain ATCC 204508 / S288c) (Baker's yeast), this protein is Putative increased recombination centers protein 11 (IRC11).